The sequence spans 411 residues: Acetate kinase (411 aa).

Asn7 is a Mg(2+) binding site. Lys14 lines the ATP pocket. Residue Arg94 participates in substrate binding. Asp151 (proton donor/acceptor) is an active-site residue. ATP is bound by residues 211 to 215 (HLGNG), 285 to 287 (DMR), and 333 to 337 (GIGEN). Glu387 is a Mg(2+) binding site.

This sequence belongs to the acetokinase family. Homodimer. Mg(2+) serves as cofactor. It depends on Mn(2+) as a cofactor.

Its subcellular location is the cytoplasm. It catalyses the reaction acetate + ATP = acetyl phosphate + ADP. It participates in metabolic intermediate biosynthesis; acetyl-CoA biosynthesis; acetyl-CoA from acetate: step 1/2. In terms of biological role, catalyzes the formation of acetyl phosphate from acetate and ATP. Can also catalyze the reverse reaction. In Syntrophobacter fumaroxidans (strain DSM 10017 / MPOB), this protein is Acetate kinase.